Here is a 399-residue protein sequence, read N- to C-terminus: 4-hydroxy-3-methylbut-2-enyl diphosphate reductase (399 aa).

[4Fe-4S] cluster is bound at residue C66. H96 serves as a coordination point for (2E)-4-hydroxy-3-methylbut-2-enyl diphosphate. H96 contributes to the dimethylallyl diphosphate binding site. H96 contacts isopentenyl diphosphate. C157 lines the [4Fe-4S] cluster pocket. (2E)-4-hydroxy-3-methylbut-2-enyl diphosphate is bound at residue H185. H185 lines the dimethylallyl diphosphate pocket. H185 lines the isopentenyl diphosphate pocket. E187 functions as the Proton donor in the catalytic mechanism. T250 is a binding site for (2E)-4-hydroxy-3-methylbut-2-enyl diphosphate. C288 is a binding site for [4Fe-4S] cluster. Residues S317, S318, N319, and S379 each contribute to the (2E)-4-hydroxy-3-methylbut-2-enyl diphosphate site. 4 residues coordinate dimethylallyl diphosphate: S317, S318, N319, and S379. Positions 317, 318, 319, and 379 each coordinate isopentenyl diphosphate.

It belongs to the IspH family. [4Fe-4S] cluster is required as a cofactor.

It carries out the reaction isopentenyl diphosphate + 2 oxidized [2Fe-2S]-[ferredoxin] + H2O = (2E)-4-hydroxy-3-methylbut-2-enyl diphosphate + 2 reduced [2Fe-2S]-[ferredoxin] + 2 H(+). The enzyme catalyses dimethylallyl diphosphate + 2 oxidized [2Fe-2S]-[ferredoxin] + H2O = (2E)-4-hydroxy-3-methylbut-2-enyl diphosphate + 2 reduced [2Fe-2S]-[ferredoxin] + 2 H(+). Its pathway is isoprenoid biosynthesis; dimethylallyl diphosphate biosynthesis; dimethylallyl diphosphate from (2E)-4-hydroxy-3-methylbutenyl diphosphate: step 1/1. It functions in the pathway isoprenoid biosynthesis; isopentenyl diphosphate biosynthesis via DXP pathway; isopentenyl diphosphate from 1-deoxy-D-xylulose 5-phosphate: step 6/6. Functionally, catalyzes the conversion of 1-hydroxy-2-methyl-2-(E)-butenyl 4-diphosphate (HMBPP) into a mixture of isopentenyl diphosphate (IPP) and dimethylallyl diphosphate (DMAPP). Acts in the terminal step of the DOXP/MEP pathway for isoprenoid precursor biosynthesis. The polypeptide is 4-hydroxy-3-methylbut-2-enyl diphosphate reductase (Synechococcus sp. (strain WH7803)).